We begin with the raw amino-acid sequence, 433 residues long: Trigger factor (433 aa).

The region spanning 163 to 248 (GDFVTFDFKG…IKEIKVKELP (86 aa)) is the PPIase FKBP-type domain.

Belongs to the FKBP-type PPIase family. Tig subfamily.

The protein localises to the cytoplasm. It catalyses the reaction [protein]-peptidylproline (omega=180) = [protein]-peptidylproline (omega=0). Involved in protein export. Acts as a chaperone by maintaining the newly synthesized protein in an open conformation. Functions as a peptidyl-prolyl cis-trans isomerase. This Geotalea uraniireducens (strain Rf4) (Geobacter uraniireducens) protein is Trigger factor.